The chain runs to 207 residues: Ribonuclease HII (207 aa).

Positions 1–207 constitute an RNase H type-2 domain; sequence MDVLGIDEAG…ATVEKMKNSQ (207 aa). Positions 7, 8, and 105 each coordinate a divalent metal cation.

It belongs to the RNase HII family. Requires Mn(2+) as cofactor. It depends on Mg(2+) as a cofactor.

It localises to the cytoplasm. It carries out the reaction Endonucleolytic cleavage to 5'-phosphomonoester.. In terms of biological role, endonuclease that specifically degrades the RNA of RNA-DNA hybrids. The sequence is that of Ribonuclease HII from Methanobrevibacter smithii (strain ATCC 35061 / DSM 861 / OCM 144 / PS).